The following is a 178-amino-acid chain: NAD(P)H-quinone oxidoreductase subunit J (178 aa).

This sequence belongs to the complex I 30 kDa subunit family. In terms of assembly, NDH-1 can be composed of about 15 different subunits; different subcomplexes with different compositions have been identified which probably have different functions.

The protein resides in the cellular thylakoid membrane. It carries out the reaction a plastoquinone + NADH + (n+1) H(+)(in) = a plastoquinol + NAD(+) + n H(+)(out). The enzyme catalyses a plastoquinone + NADPH + (n+1) H(+)(in) = a plastoquinol + NADP(+) + n H(+)(out). Functionally, NDH-1 shuttles electrons from an unknown electron donor, via FMN and iron-sulfur (Fe-S) centers, to quinones in the respiratory and/or the photosynthetic chain. The immediate electron acceptor for the enzyme in this species is believed to be plastoquinone. Couples the redox reaction to proton translocation, and thus conserves the redox energy in a proton gradient. Cyanobacterial NDH-1 also plays a role in inorganic carbon-concentration. In Crocosphaera subtropica (strain ATCC 51142 / BH68) (Cyanothece sp. (strain ATCC 51142)), this protein is NAD(P)H-quinone oxidoreductase subunit J.